The following is a 401-amino-acid chain: Na(+)/H(+) antiporter NhaA 2 (401 aa).

The next 11 membrane-spanning stretches (helical) occupy residues 13–33 (AAGG…ANSP), 59–79 (LLLW…GLEV), 94–114 (ITLP…IYVW), 125–145 (GWAI…TIFG), 154–174 (LFLL…IALF), 178–198 (DLST…FLLN), 209–229 (VLIG…ATLA), 260–280 (WVGF…SLFG), 292–312 (LGIA…VCWI), 332–352 (GVSL…SLAF), and 363–383 (VKAG…VLLA).

The protein belongs to the NhaA Na(+)/H(+) (TC 2.A.33) antiporter family.

It localises to the cell inner membrane. The catalysed reaction is Na(+)(in) + 2 H(+)(out) = Na(+)(out) + 2 H(+)(in). In terms of biological role, na(+)/H(+) antiporter that extrudes sodium in exchange for external protons. This chain is Na(+)/H(+) antiporter NhaA 2, found in Pseudoalteromonas atlantica (strain T6c / ATCC BAA-1087).